Here is a 471-residue protein sequence, read N- to C-terminus: Alpha-1,3/1,6-mannosyltransferase alg-2 (471 aa).

N-linked (GlcNAc...) asparagine glycosylation is found at asparagine 178 and asparagine 279. The chain crosses the membrane as a helical span at residues 446-466; that stretch reads GMILLVVGAAVAAVAGVISAV.

It belongs to the glycosyltransferase group 1 family. Glycosyltransferase 4 subfamily.

The protein resides in the endoplasmic reticulum membrane. The enzyme catalyses a beta-D-Man-(1-&gt;4)-beta-D-GlcNAc-(1-&gt;4)-alpha-D-GlcNAc-diphospho-di-trans,poly-cis-dolichol + GDP-alpha-D-mannose = an alpha-D-Man-(1-&gt;3)-beta-D-Man-(1-&gt;4)-beta-D-GlcNAc-(1-&gt;4)-alpha-D-GlcNAc-diphospho-di-trans,poly-cis-dolichol + GDP + H(+). It carries out the reaction an alpha-D-Man-(1-&gt;3)-beta-D-Man-(1-&gt;4)-beta-D-GlcNAc-(1-&gt;4)-alpha-D-GlcNAc-diphospho-di-trans,poly-cis-dolichol + GDP-alpha-D-mannose = an alpha-D-Man-(1-&gt;3)-[alpha-D-Man-(1-&gt;6)]-beta-D-Man-(1-&gt;4)-beta-D-GlcNAc-(1-&gt;4)-alpha-D-GlcNAc-diphospho-di-trans,poly-cis-dolichol + GDP + H(+). It participates in protein modification; protein glycosylation. Mannosylates Man(2)GlcNAc(2)-dolichol diphosphate and Man(1)GlcNAc(2)-dolichol diphosphate to form Man(3)GlcNAc(2)-dolichol diphosphate. The chain is Alpha-1,3/1,6-mannosyltransferase alg-2 (alg-2) from Neurospora crassa (strain ATCC 24698 / 74-OR23-1A / CBS 708.71 / DSM 1257 / FGSC 987).